A 129-amino-acid polypeptide reads, in one-letter code: Small ribosomal subunit protein uS11 (129 aa).

It belongs to the universal ribosomal protein uS11 family. Part of the 30S ribosomal subunit. Interacts with proteins S7 and S18. Binds to IF-3.

Located on the platform of the 30S subunit, it bridges several disparate RNA helices of the 16S rRNA. Forms part of the Shine-Dalgarno cleft in the 70S ribosome. This is Small ribosomal subunit protein uS11 from Bradyrhizobium sp. (strain ORS 278).